Reading from the N-terminus, the 335-residue chain is Tetraacyldisaccharide 4'-kinase (335 aa).

58–65 contacts ATP; sequence TVGGSGKT.

Belongs to the LpxK family.

The catalysed reaction is a lipid A disaccharide + ATP = a lipid IVA + ADP + H(+). It participates in glycolipid biosynthesis; lipid IV(A) biosynthesis; lipid IV(A) from (3R)-3-hydroxytetradecanoyl-[acyl-carrier-protein] and UDP-N-acetyl-alpha-D-glucosamine: step 6/6. Functionally, transfers the gamma-phosphate of ATP to the 4'-position of a tetraacyldisaccharide 1-phosphate intermediate (termed DS-1-P) to form tetraacyldisaccharide 1,4'-bis-phosphate (lipid IVA). This Shewanella sp. (strain ANA-3) protein is Tetraacyldisaccharide 4'-kinase.